The following is a 303-amino-acid chain: Phytochrome-associated serine/threonine-protein phosphatase 3 (303 aa).

The Zn(2+) site is built by D50, H52, D78, and N110. Catalysis depends on H111, which acts as the Proton donor. Positions 160 and 234 each coordinate Zn(2+).

It belongs to the PPP phosphatase family. PP-6 (PP-V) subfamily. In terms of assembly, interacts with PHYA and PHYB, mostly when they are phosphorylated and in Pfr forms. Interacts with TAP46. Interacts with NRP. Interacts with PIN1 and PIN2. Interacts with ABI5. Interacts with PIF3 and PIF4. Protein phosphatase 6 (PP6) holoenzyme is a heterotrimeric complex formed by the catalytic subunit FYPP, a SAPS domain-containing subunit (SAL) and a protein phosphatase 2A regulatory subunit A (PP2AA). Zn(2+) serves as cofactor. Mostly expressed in flowers. Also detected to a lower extent in stems and leaves. Expressed in roots.

It is found in the cytoplasm. The enzyme catalyses O-phospho-L-seryl-[protein] + H2O = L-seryl-[protein] + phosphate. The catalysed reaction is O-phospho-L-threonyl-[protein] + H2O = L-threonyl-[protein] + phosphate. Functionally, catalytic subunit of protein phosphatase 6 (PP6). Dephosphorylates phosphorylated phytochromes, with a preference toward Pfr forms. Plays a major role in the photoperiodic control of flowering time in long days by modulating phytochrome signals in flowering time control. Involved in the regulation of polar auxin transport in roots. Dephosphorylates directly the auxin efflux carriers PIN1 and PIN2, thus promoting their proper polar localization in root cell plasma membrane. Acts antagonistically with the protein kinase PID to regulate the reversible phosphorylation of PIN and polar targeting, subsequently impacting polar auxin transport and plant development. Involved in the regulation of abscisic acid (ABA) signaling during seed germination and postgermination seedling growth. Functions as a negative regulator of ABA signaling through direct dephosphorylation and destabilization of ABI5 protein. Acts antagonistically with the protein kinase SRK2E/SNRK2.6 to regulate ABI5 phosphorylation and ABA responses. Involved in the regulation of phosphorylation status in hypocotyl phototropism. Involved in the negative regulation of photomorphogenesis by controlling the stability and transcriptional activity of PIF3 and PIF4 proteins in the dark, via the regulation of their phosphorylation status. In Arabidopsis thaliana (Mouse-ear cress), this protein is Phytochrome-associated serine/threonine-protein phosphatase 3.